The following is a 154-amino-acid chain: Peptide methionine sulfoxide reductase MsrB (154 aa).

One can recognise a MsrB domain in the interval 28–150 (DQQWREQLSE…NSVSLIFNKI (123 aa)). Residues Cys67, Cys70, Cys116, and Cys119 each coordinate Zn(2+). The active-site Nucleophile is Cys139.

Belongs to the MsrB Met sulfoxide reductase family. Zn(2+) serves as cofactor.

The enzyme catalyses L-methionyl-[protein] + [thioredoxin]-disulfide + H2O = L-methionyl-(R)-S-oxide-[protein] + [thioredoxin]-dithiol. This is Peptide methionine sulfoxide reductase MsrB from Vibrio vulnificus (strain YJ016).